The primary structure comprises 360 residues: Protein MGF 360-1L (360 aa).

This sequence belongs to the asfivirus MGF 360 family.

Its function is as follows. Plays a role in virus cell tropism, and may be required for efficient virus replication in macrophages. This chain is Protein MGF 360-1L, found in African swine fever virus (strain Badajoz 1971 Vero-adapted) (Ba71V).